The primary structure comprises 2437 residues: Neurogenic locus notch homolog protein 1 (2437 aa).

Positions Met1 to Ala20 are cleaved as a signal peptide. EGF-like domains lie at Gln21–Gln57, Phe58–Leu98, Val101–Gln138, and Leu139–Arg175. The Extracellular portion of the chain corresponds to Gln21–Tyr1726. Disulfide bonds link Cys25–Cys35, Cys29–Cys45, Cys47–Cys56, Cys62–Cys73, Cys67–Cys86, Cys88–Cys97, Cys105–Cys116, Cys110–Cys126, Cys128–Cys137, Cys143–Cys154, Cys148–Cys163, Cys165–Cys174, Cys181–Cys194, Cys188–Cys203, Cys205–Cys214, Cys221–Cys232, Cys226–Cys242, Cys244–Cys253, Cys260–Cys271, Cys265–Cys280, Cys282–Cys291, Cys298–Cys311, Cys305–Cys320, Cys322–Cys331, Cys338–Cys349, Cys343–Cys358, Cys360–Cys369, Cys375–Cys386, Cys380–Cys397, Cys399–Cys408, Cys415–Cys428, Cys422–Cys437, Cys439–Cys448, Cys455–Cys466, Cys460–Cys475, Cys477–Cys486, Cys493–Cys503, Cys498–Cys512, Cys514–Cys523, Cys530–Cys541, Cys535–Cys550, Cys552–Cys561, Cys568–Cys578, Cys573–Cys587, Cys589–Cys598, Cys605–Cys616, Cys610–Cys625, Cys627–Cys636, Cys643–Cys653, Cys648–Cys662, Cys664–Cys673, Cys680–Cys691, Cys685–Cys700, Cys702–Cys711, Cys718–Cys728, Cys723–Cys737, Cys739–Cys748, Cys755–Cys766, Cys760–Cys775, Cys777–Cys786, Cys793–Cys804, Cys798–Cys813, Cys815–Cys824, Cys831–Cys842, Cys836–Cys853, Cys855–Cys864, Cys871–Cys882, Cys876–Cys891, Cys893–Cys902, Cys909–Cys920, Cys914–Cys929, Cys931–Cys940, Cys947–Cys958, Cys952–Cys967, Cys969–Cys978, Cys985–Cys996, Cys990–Cys1005, Cys1007–Cys1016, Cys1023–Cys1034, Cys1028–Cys1043, Cys1045–Cys1054, Cys1061–Cys1072, Cys1066–Cys1081, Cys1083–Cys1092, Cys1099–Cys1120, Cys1114–Cys1129, Cys1131–Cys1140, Cys1147–Cys1158, Cys1152–Cys1167, Cys1169–Cys1178, Cys1185–Cys1196, Cys1190–Cys1205, Cys1207–Cys1216, Cys1223–Cys1242, Cys1236–Cys1251, Cys1253–Cys1262, Cys1269–Cys1282, Cys1274–Cys1291, Cys1293–Cys1302, Cys1309–Cys1320, Cys1314–Cys1332, Cys1334–Cys1343, Cys1350–Cys1361, Cys1355–Cys1370, Cys1372–Cys1381, Cys1389–Cys1400, Cys1394–Cys1411, Cys1413–Cys1422, Cys1447–Cys1470, Cys1452–Cys1465, and Cys1461–Cys1477. The EGF-like 5; calcium-binding domain maps to Asp177–Gln215. Positions Leu217–Glu254 constitute an EGF-like 6 domain. Residue Thr231 is glycosylated (O-linked (Fuc...) threonine; alternate). Thr231 is a glycosylation site (O-linked (GalNAc...) threonine; alternate). The EGF-like 7; calcium-binding domain maps to Asn256–Thr292. One can recognise an EGF-like 8; calcium-binding domain in the interval Asp294–Ser332. Residues Asn334–His370 enclose the EGF-like 9; calcium-binding domain. The region spanning Leu371 to Asn409 is the EGF-like 10 domain. Residues Asp411 to Glu449 form the EGF-like 11; calcium-binding domain. The 37-residue stretch at Asp451–Gln487 folds into the EGF-like 12; calcium-binding domain. The EGF-like 13; calcium-binding domain occupies Asn489–Gln524. In terms of domain architecture, EGF-like 14; calcium-binding spans Asp526–Glu562. One can recognise an EGF-like 15; calcium-binding domain in the interval Asp564–Glu599. In terms of domain architecture, EGF-like 16; calcium-binding spans Asn601–Glu637. Residues Asn639 to Asn674 form the EGF-like 17; calcium-binding domain. The region spanning Asn676 to Leu712 is the EGF-like 18; calcium-binding domain. Residues Gln714 to Asp749 form the EGF-like 19; calcium-binding domain. An EGF-like 20; calcium-binding domain is found at Asn751–Gln787. The region spanning Asn789 to Glu825 is the EGF-like 21; calcium-binding domain. An EGF-like 22 domain is found at Val827 to Glu865. Residues Asp867–Glu903 enclose the EGF-like 23; calcium-binding domain. Positions Asp905–Ala941 constitute an EGF-like 24; calcium-binding domain. Residues Asp943 to Glu979 enclose the EGF-like 25; calcium-binding domain. Residue Asn957 is glycosylated (N-linked (GlcNAc...) asparagine). One can recognise an EGF-like 26 domain in the interval Asn981–Gln1017. The 37-residue stretch at Asp1019 to Gln1055 folds into the EGF-like 27; calcium-binding domain. EGF-like domains are found at residues Leu1057–Asp1093 and Pro1095–Gln1141. Residues Gln1143 to Ser1179 enclose the EGF-like 30; calcium-binding domain. Asn1177 carries N-linked (GlcNAc...) asparagine glycosylation. Residues Glu1181–Glu1217 form the EGF-like 31; calcium-binding domain. Positions Asp1219–Glu1263 constitute an EGF-like 32; calcium-binding domain. EGF-like domains lie at Asp1265–Glu1303, Val1305–Glu1344, Asp1346–Gln1382, and Met1385–His1423. Thr1399 carries an O-linked (Fuc...) threonine; alternate glycan. O-linked (GalNAc...) threonine; alternate glycosylation is present at Thr1399. 3 LNR repeats span residues Cys1447–Asn1487, Cys1488–Gln1525, and Cys1526–Lys1566. Asn1487 is a glycosylation site (N-linked (GlcNAc...) asparagine). Disulfide bonds link Cys1488/Cys1512, Cys1494/Cys1507, Cys1503/Cys1519, Cys1526/Cys1552, Cys1534/Cys1547, and Cys1543/Cys1559. A glycan (N-linked (GlcNAc...) asparagine) is linked at Asn1585. Residues Pro1727–Val1747 form a helical membrane-spanning segment. Residues Ser1748–Lys2437 lie on the Cytoplasmic side of the membrane. Residues Lys1770–Ser1790 are disordered. 6 ANK repeats span residues Asp1867–Asn1910, Thr1915–Val1944, Met1948–Ala1978, Asp1982–Ala2011, Ser2015–Leu2044, and Lys2048–Ile2077. 2 disordered regions span residues Ile2127 to Met2174 and Arg2356 to Lys2437. A compositionally biased stretch (polar residues) spans Arg2356 to Gln2387. The span at Pro2396–Ser2411 shows a compositional bias: low complexity. Residues Asn2412 to Met2429 are compositionally biased toward polar residues.

It belongs to the NOTCH family. In terms of processing, synthesized in the endoplasmic reticulum as an inactive form which is proteolytically cleaved by a furin-like convertase in the trans-Golgi network before it reaches the plasma membrane to yield an active, ligand-accessible form. Cleavage results in a C-terminal fragment N(TM) and a N-terminal fragment N(EC). Following ligand binding, it is cleaved by adam17 to yield a membrane-associated intermediate fragment called notch extracellular truncation (NEXT). Following endocytosis, this fragment is then cleaved by presenilin dependent gamma-secretase to release a Notch-derived peptide containing the intracellular domain (NICD) from the membrane. Post-translationally, O-glycosylated on the EGF-like domains. Contains both O-linked fucose and O-linked glucose. O-linked glycosylation by galnt11 is involved in determination of left/right symmetry: glycosylation promotes activation of notch1, possibly by promoting cleavage by adam17, modulating the balance between motile and immotile (sensory) cilia at the left-right organiser (LRO).

The protein localises to the cell membrane. The protein resides in the nucleus. Its function is as follows. Functions as a receptor for membrane-bound ligands Jagged-1 (JAG1), Jagged-2 (JAG2) and Delta-1 (DLL1) to regulate cell-fate determination. Upon ligand activation through the released notch intracellular domain (NICD) it forms a transcriptional activator complex with RBPJ/RBPSUH and activates genes of the enhancer of split locus. Affects the implementation of differentiation, proliferation and apoptotic programs. Involved in angiogenesis; negatively regulates endothelial cell proliferation and migration and angiogenic sprouting. Involved in the maturation of both CD4(+) and CD8(+) cells in the thymus. Important for follicular differentiation and possibly cell fate selection within the follicle. During cerebellar development, functions as a receptor for neuronal DNER and is involved in the differentiation of Bergmann glia. Represses neuronal and myogenic differentiation. May play an essential role in postimplantation development, probably in some aspect of cell specification and/or differentiation. May be involved in mesoderm development, somite formation and neurogenesis. Involved in determination of left/right symmetry by modulating the balance between motile and immotile (sensory) cilia at the left-right organiser (LRO). The polypeptide is Neurogenic locus notch homolog protein 1 (notch1a) (Danio rerio (Zebrafish)).